The chain runs to 329 residues: 4-hydroxythreonine-4-phosphate dehydrogenase (329 aa).

Substrate-binding residues include histidine 136 and threonine 137. 3 residues coordinate a divalent metal cation: histidine 166, histidine 211, and histidine 266. Substrate contacts are provided by lysine 274, asparagine 283, and arginine 292.

This sequence belongs to the PdxA family. As to quaternary structure, homodimer. The cofactor is Zn(2+). Mg(2+) is required as a cofactor. It depends on Co(2+) as a cofactor.

The protein resides in the cytoplasm. It catalyses the reaction 4-(phosphooxy)-L-threonine + NAD(+) = 3-amino-2-oxopropyl phosphate + CO2 + NADH. It participates in cofactor biosynthesis; pyridoxine 5'-phosphate biosynthesis; pyridoxine 5'-phosphate from D-erythrose 4-phosphate: step 4/5. In terms of biological role, catalyzes the NAD(P)-dependent oxidation of 4-(phosphooxy)-L-threonine (HTP) into 2-amino-3-oxo-4-(phosphooxy)butyric acid which spontaneously decarboxylates to form 3-amino-2-oxopropyl phosphate (AHAP). This Salmonella typhi protein is 4-hydroxythreonine-4-phosphate dehydrogenase.